The following is a 161-amino-acid chain: MNDAFAGLPYRPCVGVMLVNSQGRVFVGRRIDDKDGVAWQMPQGGIDDGEELHPAALRELSEETGVAAELVTIIAESREEHLYDLPDELIGKLWGGQYRGQRQKWLLLRFAGEDTDIRLDAHDPAEFSEWRWVEPEQLPDLIVPFKRRVYRQVVDEFRDLI.

The 147-residue stretch at 9–155 folds into the Nudix hydrolase domain; the sequence is PYRPCVGVML…KRRVYRQVVD (147 aa). The Nudix box motif lies at 44–65; the sequence is GGIDDGEELHPAALRELSEETG.

Belongs to the Nudix hydrolase family. RppH subfamily. A divalent metal cation is required as a cofactor.

Accelerates the degradation of transcripts by removing pyrophosphate from the 5'-end of triphosphorylated RNA, leading to a more labile monophosphorylated state that can stimulate subsequent ribonuclease cleavage. In Novosphingobium aromaticivorans (strain ATCC 700278 / DSM 12444 / CCUG 56034 / CIP 105152 / NBRC 16084 / F199), this protein is RNA pyrophosphohydrolase.